The chain runs to 957 residues: UvrABC system protein A (957 aa).

33–40 lines the ATP pocket; sequence GLSGSGKS. A C4-type zinc finger spans residues 252-279; the sequence is CPHCGFSIGELEPRLFSFNSPFGACPTC. ABC transporter domains are found at residues 309-587 and 607-935; these read WTPI…PNSL and PDGR…RYLK. ATP is bound at residue 639-646; that stretch reads GVSGSGKS. Residues 738 to 764 form a C4-type zinc finger; the sequence is CEACRGDGIIKIEMHFLPDVYVPCEVC.

Belongs to the ABC transporter superfamily. UvrA family. Forms a heterotetramer with UvrB during the search for lesions.

It localises to the cytoplasm. The UvrABC repair system catalyzes the recognition and processing of DNA lesions. UvrA is an ATPase and a DNA-binding protein. A damage recognition complex composed of 2 UvrA and 2 UvrB subunits scans DNA for abnormalities. When the presence of a lesion has been verified by UvrB, the UvrA molecules dissociate. The chain is UvrABC system protein A from Bacillus subtilis (strain 168).